Consider the following 235-residue polypeptide: MAVYDTIILDIEGTVCSISFVKNVLFPYFLDKLPFLLEQVEFPLDHTDNVTVTQILAKFPERYTKSKECLKTYINELVANDIKDPTLKQLQGIVWQAGYEEGEIVVDLYNDVIEALDRWKKEDKSVYIYSSGSIKAQKLLFSHVKFKSETRDLTNYIKGYYDPTSVGSKIESESYLNILKDLNKDPESAIFLSDNIKEVAASIRAGIKSLVVKRPGNTVHHDNQSFDFVYSFDNV.

Positions 10 and 12 each coordinate Mg(2+). Substrate is bound by residues 130–131 (SS) and Lys-169. Residue Asp-194 participates in Mg(2+) binding.

The protein belongs to the HAD-like hydrolase superfamily. MasA/MtnC family. Monomer. Mg(2+) is required as a cofactor.

The protein resides in the cytoplasm. Its subcellular location is the nucleus. The enzyme catalyses 5-methylsulfanyl-2,3-dioxopentyl phosphate + H2O = 1,2-dihydroxy-5-(methylsulfanyl)pent-1-en-3-one + phosphate. The protein operates within amino-acid biosynthesis; L-methionine biosynthesis via salvage pathway; L-methionine from S-methyl-5-thio-alpha-D-ribose 1-phosphate: step 3/6. It participates in amino-acid biosynthesis; L-methionine biosynthesis via salvage pathway; L-methionine from S-methyl-5-thio-alpha-D-ribose 1-phosphate: step 4/6. Its function is as follows. Bifunctional enzyme that catalyzes the enolization of 2,3-diketo-5-methylthiopentyl-1-phosphate (DK-MTP-1-P) into the intermediate 2-hydroxy-3-keto-5-methylthiopentenyl-1-phosphate (HK-MTPenyl-1-P), which is then dephosphorylated to form the acireductone 1,2-dihydroxy-3-keto-5-methylthiopentene (DHK-MTPene). The polypeptide is Enolase-phosphatase E1 (Komagataella phaffii (strain GS115 / ATCC 20864) (Yeast)).